The sequence spans 144 residues: D-aminoacyl-tRNA deacylase (144 aa).

The short motif at 136–137 (GP) is the Gly-cisPro motif, important for rejection of L-amino acids element.

It belongs to the DTD family. As to quaternary structure, homodimer.

It localises to the cytoplasm. It catalyses the reaction glycyl-tRNA(Ala) + H2O = tRNA(Ala) + glycine + H(+). The enzyme catalyses a D-aminoacyl-tRNA + H2O = a tRNA + a D-alpha-amino acid + H(+). Its function is as follows. An aminoacyl-tRNA editing enzyme that deacylates mischarged D-aminoacyl-tRNAs. Also deacylates mischarged glycyl-tRNA(Ala), protecting cells against glycine mischarging by AlaRS. Acts via tRNA-based rather than protein-based catalysis; rejects L-amino acids rather than detecting D-amino acids in the active site. By recycling D-aminoacyl-tRNA to D-amino acids and free tRNA molecules, this enzyme counteracts the toxicity associated with the formation of D-aminoacyl-tRNA entities in vivo and helps enforce protein L-homochirality. This Haemophilus influenzae (strain 86-028NP) protein is D-aminoacyl-tRNA deacylase.